The sequence spans 649 residues: Acetyl-coenzyme A synthetase (649 aa).

Residues 191–194 (RAGR), threonine 311, and asparagine 335 each bind CoA. Residues 387–389 (GEP), 411–416 (DTWWQT), aspartate 500, and arginine 515 each bind ATP. Position 523 (serine 523) interacts with CoA. Arginine 526 is a binding site for ATP. Positions 537, 539, and 542 each coordinate Mg(2+). CoA is bound at residue arginine 584. Position 609 is an N6-acetyllysine (lysine 609).

This sequence belongs to the ATP-dependent AMP-binding enzyme family. It depends on Mg(2+) as a cofactor. Post-translationally, acetylated. Deacetylation by the SIR2-homolog deacetylase activates the enzyme.

It carries out the reaction acetate + ATP + CoA = acetyl-CoA + AMP + diphosphate. Its function is as follows. Catalyzes the conversion of acetate into acetyl-CoA (AcCoA), an essential intermediate at the junction of anabolic and catabolic pathways. AcsA undergoes a two-step reaction. In the first half reaction, AcsA combines acetate with ATP to form acetyl-adenylate (AcAMP) intermediate. In the second half reaction, it can then transfer the acetyl group from AcAMP to the sulfhydryl group of CoA, forming the product AcCoA. This Photobacterium profundum (strain SS9) protein is Acetyl-coenzyme A synthetase.